The chain runs to 216 residues: ATP-dependent dethiobiotin synthetase BioD (216 aa).

12–17 (NVGKTF) serves as a coordination point for ATP. Thr-16 lines the Mg(2+) pocket. Lys-36 is an active-site residue. Ser-40 contributes to the substrate binding site. ATP-binding positions include Asp-53, 110 to 113 (EGAG), and 170 to 171 (NQ). Asp-53 and Glu-110 together coordinate Mg(2+).

The protein belongs to the dethiobiotin synthetase family. In terms of assembly, homodimer. Mg(2+) is required as a cofactor.

It is found in the cytoplasm. It carries out the reaction (7R,8S)-7,8-diammoniononanoate + CO2 + ATP = (4R,5S)-dethiobiotin + ADP + phosphate + 3 H(+). It functions in the pathway cofactor biosynthesis; biotin biosynthesis; biotin from 7,8-diaminononanoate: step 1/2. In terms of biological role, catalyzes a mechanistically unusual reaction, the ATP-dependent insertion of CO2 between the N7 and N8 nitrogen atoms of 7,8-diaminopelargonic acid (DAPA, also called 7,8-diammoniononanoate) to form a ureido ring. The protein is ATP-dependent dethiobiotin synthetase BioD of Vesicomyosocius okutanii subsp. Calyptogena okutanii (strain HA).